Reading from the N-terminus, the 115-residue chain is Large ribosomal subunit protein bL19 (115 aa).

This sequence belongs to the bacterial ribosomal protein bL19 family.

In terms of biological role, this protein is located at the 30S-50S ribosomal subunit interface and may play a role in the structure and function of the aminoacyl-tRNA binding site. The sequence is that of Large ribosomal subunit protein bL19 from Streptococcus suis (strain 98HAH33).